Here is a 1194-residue protein sequence, read N- to C-terminus: ATP-dependent RNA helicase DHX30 (1194 aa).

Over residues 1 to 10 the composition is skewed to basic and acidic residues; the sequence is MFSLDSFRKD. Residues 1–27 form a disordered region; it reads MFSLDSFRKDRAQHRQRQCKLPPPRLP. Ser6 is modified (phosphoserine). Positions 53 to 121 constitute a DRBM domain; the sequence is PKNLLNSVIG…QAAAAACQLF (69 aa). Residues 150–199 are disordered; the sequence is ADSWWRPEPTMPPTSWRQLNPESIRPGGPGGLSRSLGREEEEDEEEELEE. A compositionally biased stretch (acidic residues) spans 188 to 199; that stretch reads EEEEDEEEELEE. Residues Ser226 and Ser380 each carry the phosphoserine modification. Residues 444–612 form the Helicase ATP-binding domain; that stretch reads LNAIEQHPVV…FGGCPVIKVP (169 aa). An ATP-binding site is contributed by 457–464; sequence GDTGCGKT. The DEAH box motif lies at 559–562; the sequence is DEVH. The 174-residue stretch at 654 to 827 folds into the Helicase C-terminal domain; the sequence is LVTDLVLHID…NLVLQAKIHM (174 aa).

It belongs to the DEAD box helicase family. DEAH subfamily. In terms of assembly, identified in a complex with TFAM and SSBP1. Interacts (via N-terminus) with ZC3HAV1 (via N-terminal domain) in an RNA-independent manner. Found in a complex with GRSF1, DDX28, FASTKD2 and FASTKD5.

The protein resides in the cytoplasm. It localises to the mitochondrion. Its subcellular location is the mitochondrion matrix. It is found in the mitochondrion nucleoid. It carries out the reaction ATP + H2O = ADP + phosphate + H(+). Its function is as follows. RNA-dependent helicase. Plays an important role in the assembly of the mitochondrial large ribosomal subunit. Required for optimal function of the zinc-finger antiviral protein ZC3HAV1. Associates with mitochondrial DNA. Involved in nervous system development and differentiation through its involvement in the up-regulation of a number of genes which are required for neurogenesis, including GSC, NCAM1, neurogenin, and NEUROD. The chain is ATP-dependent RNA helicase DHX30 (DHX30) from Pongo abelii (Sumatran orangutan).